Reading from the N-terminus, the 254-residue chain is Protein EFFECTOR OF TRANSCRIPTION 3 (254 aa).

Positions 103–152 (RCTGLYELGVGVIGQDQGQNFDPDNNVLGVYVGQCVDVKSRLQDYGRRGG) constitute a GIY-YIG domain.

It localises to the cytoplasm. The chain is Protein EFFECTOR OF TRANSCRIPTION 3 from Arabidopsis thaliana (Mouse-ear cress).